Consider the following 185-residue polypeptide: Elongation factor P (185 aa).

The protein belongs to the elongation factor P family.

The protein localises to the cytoplasm. The protein operates within protein biosynthesis; polypeptide chain elongation. Involved in peptide bond synthesis. Stimulates efficient translation and peptide-bond synthesis on native or reconstituted 70S ribosomes in vitro. Probably functions indirectly by altering the affinity of the ribosome for aminoacyl-tRNA, thus increasing their reactivity as acceptors for peptidyl transferase. This is Elongation factor P from Bacillus cereus (strain G9842).